Reading from the N-terminus, the 376-residue chain is MARVEL domain-containing protein 3 (376 aa).

Over residues 1–95 (MKNTSGHREP…EKSRQSRARP (95 aa)) the composition is skewed to basic and acidic residues. The tract at residues 1-134 (MKNTSGHREP…GRRGLESERA (134 aa)) is disordered. Residues 1 to 173 (MKNTSGHREP…HKCRYLCTGR (173 aa)) lie on the Cytoplasmic side of the membrane. The region spanning 168–361 (YLCTGRACWQ…GAVLAFRGYR (194 aa)) is the MARVEL domain. A helical transmembrane segment spans residues 174 to 194 (ACWQMLKALLNLLILACSSVS). Over 195 to 247 (YNSTGGYTGITSLGGIYYYQYGGAYSGFDGADGERAQQLDVQFYQLKLPTVTA) the chain is Extracellular. The chain crosses the membrane as a helical span at residues 248–268 (AMAYSGALMTFSCLTLLAGAL). At 269–275 (RVPWHCP) the chain is on the cytoplasmic side. The chain crosses the membrane as a helical span at residues 276-296 (LWLVIEGLMDALIAGAYVPGL). Residues 297 to 335 (YFFFQHLSAAYSSDVCKERETLYQSKGYSGFNCGVHGGD) are Extracellular-facing. The chain crosses the membrane as a helical span at residues 336 to 356 (IGAGVFAAMAIGVFAVGAVLA). Residues 357–376 (FRGYRKVKKLKEKPTEMLEF) are Cytoplasmic-facing.

As to expression, widely expressed with highest levels in small intestine, colon, stomach and lung. Liver expresses only isoform 2.

It is found in the membrane. It localises to the cell junction. The protein localises to the tight junction. Functionally, as a component of tight junctions, plays a role in paracellular ion conductivity. The chain is MARVEL domain-containing protein 3 (Marveld3) from Mus musculus (Mouse).